The primary structure comprises 223 residues: Cytidylate kinase (223 aa).

10–18 (GPASSGKST) contacts ATP.

Belongs to the cytidylate kinase family. Type 1 subfamily.

Its subcellular location is the cytoplasm. The catalysed reaction is CMP + ATP = CDP + ADP. It carries out the reaction dCMP + ATP = dCDP + ADP. The chain is Cytidylate kinase from Streptococcus pneumoniae (strain Taiwan19F-14).